Reading from the N-terminus, the 515-residue chain is MAPATEAAPARTYDDEAAYVTVDDAHRVRVARGFVPNMRVDGVVYVNAALRALVLEELAAYCDATAHRGGGYSPALKQIANVAALPGVVGASIALPDVHSGYGFAIGNVAAFDVGDETSIVSPGGVGFDINCGVRLLRTNLTEAEVGPVKEALAQSLFDHIPVGVGSRGIIPTTPAALEAVLEMGMDWSLREGYAWAEDKEHTEEYGRMLNADPSKVSARAKKRGLPQMGTLGAGNHYAEIQVVDEIYDEFAAKKMGIDRVGQVCIMIHSGSRGLGHQVATDSLTAMERAMERDGIEVNDRQLACARISSQEGQDYLAAMACAANYAWVNRSSMTFLCRQAFAKMFGKPPDELDMHVVYDVSHNIAKFEEHMVDGEMKTLLVHRKGSTRAFPPHHPLIPVDYQYTGQPVLIGGTMGTCSYILTGTEKGMRDTFGSTCHGAGRARSRNKSRHVLQYEDVLEKLKTKGIAIRVASPKLVMEEAPESYKDVTEVVNTCHDAGISKKCVKLRPIAVVKG.

5 residues coordinate Mn(2+): Asp-129, Cys-132, His-237, His-269, and His-363. Residue 236-240 (NHYAE) participates in GMP binding. GMP-binding positions include 363–364 (HN), 412–415 (GGTM), Ser-419, 438–441 (HGAG), and Lys-514. His-438 acts as the GMP-histidine intermediate in catalysis.

This sequence belongs to the RtcB family. As to quaternary structure, catalytic component of the tRNA-splicing ligase complex. Mn(2+) serves as cofactor.

It catalyses the reaction a 3'-end 3'-phospho-ribonucleotide-RNA + a 5'-end dephospho-ribonucleoside-RNA + GTP = a ribonucleotidyl-ribonucleotide-RNA + GMP + diphosphate. The enzyme catalyses a 3'-end 2',3'-cyclophospho-ribonucleotide-RNA + a 5'-end dephospho-ribonucleoside-RNA + GTP + H2O = a ribonucleotidyl-ribonucleotide-RNA + GMP + diphosphate + H(+). Functionally, catalytic subunit of the tRNA-splicing ligase complex that acts by directly joining spliced tRNA halves to mature-sized tRNAs by incorporating the precursor-derived splice junction phosphate into the mature tRNA as a canonical 3',5'-phosphodiester. May act as an RNA ligase with broad substrate specificity, and may function toward other RNAs. The sequence is that of RNA-splicing ligase RtcB homolog from Ostreococcus tauri.